The chain runs to 456 residues: MISFSLINFSNNLSWDKVTNLIFKLQKRLFKVSYVYDRKKLYVLQKIIVQLNYSRLLAIKLVNHSVFNENLPGVDGYVSLNFYESFELNEFLKYNWNNWIFQNLKKVSLFDNDGKIIVKKVPVISDRVWCYLVKFAIEPVHEALFHPFNLGYRSQYFIYEIQELILLNLSKFSFGSKKRVLKLDLSQNFCINNYSFLMEKLIAPRCIKLGIFKLLEKGFVLEFSNNCIFNKVDFSSLLLNIFLNGIEKLHNCIRYGYFLLFFLNPIDNEKELLSKIYLFLSKLDLKFNISEIELSSIINGFDFLGWHFKFSYKSYNNLCIFPSFDNYNKFLTRIKVIINNSNYGSIIKASKIYPIVKDWKEYHKYSDLFDLNYSLCFIKKRAFKIFKSESKQDFYSSKSLLLKCFSVFNIFNKDLKNLYNKFFKPLNFRHLVFLFNRGGEGFKYFYFCIHCGVILL.

This sequence to group II intron maturases.

The protein localises to the plastid. Could be required for group III intron excision. This is Maturase-like protein 1 (mat1) from Euglena longa (Euglenophycean alga).